The sequence spans 152 residues: Endoribonuclease YbeY (152 aa).

Zn(2+) contacts are provided by H118, H122, and H128.

The protein belongs to the endoribonuclease YbeY family. The cofactor is Zn(2+).

It is found in the cytoplasm. Single strand-specific metallo-endoribonuclease involved in late-stage 70S ribosome quality control and in maturation of the 3' terminus of the 16S rRNA. This chain is Endoribonuclease YbeY, found in Pelotomaculum thermopropionicum (strain DSM 13744 / JCM 10971 / SI).